The sequence spans 466 residues: Cysteine--tRNA ligase (466 aa).

Cysteine 29 is a binding site for Zn(2+). Positions proline 31–asparagine 41 match the 'HIGH' region motif. Zn(2+)-binding residues include cysteine 209, histidine 234, and glutamate 238. Positions lysine 266–serine 270 match the 'KMSKS' region motif. Lysine 269 contributes to the ATP binding site. Serine 270 carries the phosphoserine modification.

It belongs to the class-I aminoacyl-tRNA synthetase family. Monomer. Zn(2+) serves as cofactor.

It localises to the cytoplasm. The catalysed reaction is tRNA(Cys) + L-cysteine + ATP = L-cysteinyl-tRNA(Cys) + AMP + diphosphate. This is Cysteine--tRNA ligase from Bacillus velezensis (strain DSM 23117 / BGSC 10A6 / LMG 26770 / FZB42) (Bacillus amyloliquefaciens subsp. plantarum).